The chain runs to 337 residues: NADH-quinone oxidoreductase subunit H (337 aa).

Helical transmembrane passes span 9–29 (FAKI…FTYV), 77–97 (FLIA…VIPF), 110–130 (LLYI…AGWA), 154–174 (MGFA…SGIV), 181–201 (FWEW…ISGV), 229–249 (MAFA…SFLA), 274–294 (VPGI…YLWF), and 313–333 (VLIP…YGGV).

It belongs to the complex I subunit 1 family. NDH-1 is composed of 14 different subunits. Subunits NuoA, H, J, K, L, M, N constitute the membrane sector of the complex.

It is found in the cell inner membrane. It catalyses the reaction a quinone + NADH + 5 H(+)(in) = a quinol + NAD(+) + 4 H(+)(out). Functionally, NDH-1 shuttles electrons from NADH, via FMN and iron-sulfur (Fe-S) centers, to quinones in the respiratory chain. The immediate electron acceptor for the enzyme in this species is believed to be ubiquinone. Couples the redox reaction to proton translocation (for every two electrons transferred, four hydrogen ions are translocated across the cytoplasmic membrane), and thus conserves the redox energy in a proton gradient. This subunit may bind ubiquinone. This Halorhodospira halophila (strain DSM 244 / SL1) (Ectothiorhodospira halophila (strain DSM 244 / SL1)) protein is NADH-quinone oxidoreductase subunit H.